A 105-amino-acid chain; its full sequence is Large ribosomal subunit protein bL21c (105 aa).

The protein belongs to the bacterial ribosomal protein bL21 family. As to quaternary structure, part of the 50S ribosomal subunit.

It is found in the plastid. Its subcellular location is the chloroplast. Its function is as follows. This protein binds to 23S rRNA. The polypeptide is Large ribosomal subunit protein bL21c (Thalassiosira pseudonana (Marine diatom)).